Consider the following 608-residue polypeptide: CTP synthase (608 aa).

The tract at residues 1-271 is amidoligase domain; the sequence is MGQAHITKHI…DAYVVRRLGL (271 aa). S18 is a CTP binding site. Residue S18 coordinates UTP. ATP-binding positions include 19–24 and D76; that span reads SLGKGL. Residues D76 and E145 each coordinate Mg(2+). CTP-binding positions include 152–154, 192–197, and K228; these read DIE and KTKPTQ. UTP-binding positions include 192–197 and K228; that span reads KTKPTQ. The region spanning 296–545 is the Glutamine amidotransferase type-1 domain; that stretch reads TIAIVGKYVD…VAAAVAHADR (250 aa). G359 serves as a coordination point for L-glutamine. Residue C386 is the Nucleophile; for glutamine hydrolysis of the active site. Residues 387–390, E410, and R471 contribute to the L-glutamine site; that span reads LGLQ. Residues H518 and E520 contribute to the active site. Residues 550–608 form a disordered region; it reads LPVDLPSEDAPTPENGVPENGAAQTRGVTAGRSGGSIRRGASASRPSVSSNGTAALVSP. Residues 584 to 594 show a composition bias toward low complexity; that stretch reads GSIRRGASASR.

This sequence belongs to the CTP synthase family. In terms of assembly, homotetramer.

It carries out the reaction UTP + L-glutamine + ATP + H2O = CTP + L-glutamate + ADP + phosphate + 2 H(+). The enzyme catalyses L-glutamine + H2O = L-glutamate + NH4(+). The catalysed reaction is UTP + NH4(+) + ATP = CTP + ADP + phosphate + 2 H(+). It functions in the pathway pyrimidine metabolism; CTP biosynthesis via de novo pathway; CTP from UDP: step 2/2. Its activity is regulated as follows. Allosterically activated by GTP, when glutamine is the substrate; GTP has no effect on the reaction when ammonia is the substrate. The allosteric effector GTP functions by stabilizing the protein conformation that binds the tetrahedral intermediate(s) formed during glutamine hydrolysis. Inhibited by the product CTP, via allosteric rather than competitive inhibition. Functionally, catalyzes the ATP-dependent amination of UTP to CTP with either L-glutamine or ammonia as the source of nitrogen. Regulates intracellular CTP levels through interactions with the four ribonucleotide triphosphates. The chain is CTP synthase from Frankia casuarinae (strain DSM 45818 / CECT 9043 / HFP020203 / CcI3).